A 745-amino-acid chain; its full sequence is Inhibitor of nuclear factor kappa-B kinase subunit alpha (745 aa).

The Protein kinase domain occupies W15–C300. ATP contacts are provided by residues L21–V29 and K44. T23 bears the Phosphothreonine; by PKB/AKT1 and SGK1 mark. The active-site Proton acceptor is D144. Position 176 is a phosphoserine; by MAP3K14 (S176). S180 is modified (phosphoserine; by SGK1). Positions L455 to L476 are leucine-zipper. The NEMO-binding stretch occupies residues L738–L743.

The protein belongs to the protein kinase superfamily. Ser/Thr protein kinase family. I-kappa-B kinase subfamily. Component of the I-kappa-B-kinase (IKK) core complex consisting of CHUK, IKBKB and IKBKG; probably four alpha/CHUK-beta/IKBKB dimers are associated with four gamma/IKBKG subunits. The IKK core complex seems to associate with regulatory or adapter proteins to form a IKK-signalosome holo-complex. The IKK complex associates with TERF2IP/RAP1, leading to promote IKK-mediated phosphorylation of RELA/p65. Part of a complex composed of NCOA2, NCOA3, CHUK/IKKA, IKBKB, IKBKG and CREBBP. Part of a 70-90 kDa complex at least consisting of CHUK/IKKA, IKBKB, NFKBIA, RELA, ELP1 and MAP3K14. Directly interacts with TRPC4AP. May interact with TRAF2. Interacts with NALP2. May interact with MAVS/IPS1. Interacts with ARRB1 and ARRB2. Interacts with NLRC5; prevents CHUK phosphorylation and kinase activity. Interacts with PIAS1; this interaction induces PIAS1 phosphorylation. Interacts with ZNF268 isoform 2; the interaction is further increased in a TNF-alpha-dependent manner. Interacts with LRRC14. Interacts with SASH1. Directly interacts with DDX3X after the physiological activation of the TLR7 and TLR8 pathways; this interaction enhances CHUK autophosphorylation. Post-translationally, ubiquitinated by TRIM56 via 'Lys-63'-linked ubiquitination, promoting activation of CHUK/IKKA. In terms of processing, phosphorylated by MAP3K14/NIK, AKT and to a lesser extent by MEKK1, and dephosphorylated by PP2A. Autophosphorylated. In terms of tissue distribution, ubiquitous only for isoform 1, isoforms 2 and 3 are expressed predominantly in brain and T-lymphocytes.

It localises to the cytoplasm. The protein resides in the nucleus. The enzyme catalyses L-seryl-[I-kappa-B protein] + ATP = O-phospho-L-seryl-[I-kappa-B protein] + ADP + H(+). With respect to regulation, activated when phosphorylated and inactivated when dephosphorylated. Functionally, serine kinase that plays an essential role in the NF-kappa-B signaling pathway which is activated by multiple stimuli such as inflammatory cytokines, bacterial or viral products, DNA damages or other cellular stresses. Acts as a part of the canonical IKK complex in the conventional pathway of NF-kappa-B activation and phosphorylates inhibitors of NF-kappa-B on serine residues. These modifications allow polyubiquitination of the inhibitors and subsequent degradation by the proteasome. In turn, free NF-kappa-B is translocated into the nucleus and activates the transcription of hundreds of genes involved in immune response, growth control, or protection against apoptosis. Negatively regulates the pathway by phosphorylating the scaffold protein TAXBP1 and thus promoting the assembly of the A20/TNFAIP3 ubiquitin-editing complex (composed of A20/TNFAIP3, TAX1BP1, and the E3 ligases ITCH and RNF11). Therefore, CHUK plays a key role in the negative feedback of NF-kappa-B canonical signaling to limit inflammatory gene activation. As part of the non-canonical pathway of NF-kappa-B activation, the MAP3K14-activated CHUK/IKKA homodimer phosphorylates NFKB2/p100 associated with RelB, inducing its proteolytic processing to NFKB2/p52 and the formation of NF-kappa-B RelB-p52 complexes. In turn, these complexes regulate genes encoding molecules involved in B-cell survival and lymphoid organogenesis. Also participates in the negative feedback of the non-canonical NF-kappa-B signaling pathway by phosphorylating and destabilizing MAP3K14/NIK. Within the nucleus, phosphorylates CREBBP and consequently increases both its transcriptional and histone acetyltransferase activities. Modulates chromatin accessibility at NF-kappa-B-responsive promoters by phosphorylating histones H3 at 'Ser-10' that are subsequently acetylated at 'Lys-14' by CREBBP. Additionally, phosphorylates the CREBBP-interacting protein NCOA3. Also phosphorylates FOXO3 and may regulate this pro-apoptotic transcription factor. Phosphorylates RIPK1 at 'Ser-25' which represses its kinase activity and consequently prevents TNF-mediated RIPK1-dependent cell death. Phosphorylates AMBRA1 following mitophagy induction, promoting AMBRA1 interaction with ATG8 family proteins and its mitophagic activity. The protein is Inhibitor of nuclear factor kappa-B kinase subunit alpha (Chuk) of Mus musculus (Mouse).